A 345-amino-acid polypeptide reads, in one-letter code: UDP-3-O-acylglucosamine N-acyltransferase (345 aa).

Catalysis depends on H248, which acts as the Proton acceptor.

The protein belongs to the transferase hexapeptide repeat family. LpxD subfamily. In terms of assembly, homotrimer.

It catalyses the reaction a UDP-3-O-[(3R)-3-hydroxyacyl]-alpha-D-glucosamine + a (3R)-hydroxyacyl-[ACP] = a UDP-2-N,3-O-bis[(3R)-3-hydroxyacyl]-alpha-D-glucosamine + holo-[ACP] + H(+). It participates in bacterial outer membrane biogenesis; LPS lipid A biosynthesis. Its function is as follows. Catalyzes the N-acylation of UDP-3-O-acylglucosamine using 3-hydroxyacyl-ACP as the acyl donor. Is involved in the biosynthesis of lipid A, a phosphorylated glycolipid that anchors the lipopolysaccharide to the outer membrane of the cell. In Prochlorococcus marinus (strain SARG / CCMP1375 / SS120), this protein is UDP-3-O-acylglucosamine N-acyltransferase.